Reading from the N-terminus, the 100-residue chain is Aspartyl/glutamyl-tRNA(Asn/Gln) amidotransferase subunit C (100 aa).

The protein belongs to the GatC family. Heterotrimer of A, B and C subunits.

It carries out the reaction L-glutamyl-tRNA(Gln) + L-glutamine + ATP + H2O = L-glutaminyl-tRNA(Gln) + L-glutamate + ADP + phosphate + H(+). The enzyme catalyses L-aspartyl-tRNA(Asn) + L-glutamine + ATP + H2O = L-asparaginyl-tRNA(Asn) + L-glutamate + ADP + phosphate + 2 H(+). Functionally, allows the formation of correctly charged Asn-tRNA(Asn) or Gln-tRNA(Gln) through the transamidation of misacylated Asp-tRNA(Asn) or Glu-tRNA(Gln) in organisms which lack either or both of asparaginyl-tRNA or glutaminyl-tRNA synthetases. The reaction takes place in the presence of glutamine and ATP through an activated phospho-Asp-tRNA(Asn) or phospho-Glu-tRNA(Gln). This Staphylococcus carnosus (strain TM300) protein is Aspartyl/glutamyl-tRNA(Asn/Gln) amidotransferase subunit C.